The primary structure comprises 172 residues: Shikimate kinase (172 aa).

ATP is bound at residue 11 to 16 (GCGKST). Ser15 is a Mg(2+) binding site. The substrate site is built by Asp33, Arg57, and Gly80. Residue Arg120 coordinates ATP. Substrate is bound at residue Arg142. Arg158 provides a ligand contact to ATP.

Belongs to the shikimate kinase family. As to quaternary structure, monomer. Requires Mg(2+) as cofactor.

The protein localises to the cytoplasm. The enzyme catalyses shikimate + ATP = 3-phosphoshikimate + ADP + H(+). The protein operates within metabolic intermediate biosynthesis; chorismate biosynthesis; chorismate from D-erythrose 4-phosphate and phosphoenolpyruvate: step 5/7. Functionally, catalyzes the specific phosphorylation of the 3-hydroxyl group of shikimic acid using ATP as a cosubstrate. This is Shikimate kinase from Flavobacterium johnsoniae (strain ATCC 17061 / DSM 2064 / JCM 8514 / BCRC 14874 / CCUG 350202 / NBRC 14942 / NCIMB 11054 / UW101) (Cytophaga johnsonae).